We begin with the raw amino-acid sequence, 548 residues long: DNA ligase (548 aa).

Glu-252 contributes to the ATP binding site. Lys-254 (N6-AMP-lysine intermediate) is an active-site residue. Positions 259, 274, 303, 343, 414, and 420 each coordinate ATP.

It belongs to the ATP-dependent DNA ligase family. Mg(2+) is required as a cofactor.

It carries out the reaction ATP + (deoxyribonucleotide)n-3'-hydroxyl + 5'-phospho-(deoxyribonucleotide)m = (deoxyribonucleotide)n+m + AMP + diphosphate.. Functionally, DNA ligase that seals nicks in double-stranded DNA during DNA replication, DNA recombination and DNA repair. This is DNA ligase from Natronomonas pharaonis (strain ATCC 35678 / DSM 2160 / CIP 103997 / JCM 8858 / NBRC 14720 / NCIMB 2260 / Gabara) (Halobacterium pharaonis).